Reading from the N-terminus, the 119-residue chain is MARSVTVIFLVLVSLAVVLAIQKTPQIQVYSRHPPENGKPNFLNCYVSQFHPPQIEIELLKNGKKIPNIEMSDLSFSKDWSFYILAHTEFTPTETDVYACRVKHVTLKEPKTVTWDRDM.

The signal sequence occupies residues 1 to 20 (MARSVTVIFLVLVSLAVVLA). The Ig-like C1-type domain occupies 25–114 (PQIQVYSRHP…VTLKEPKTVT (90 aa)). Residues cysteine 45 and cysteine 100 are joined by a disulfide bond.

This sequence belongs to the beta-2-microglobulin family. In terms of assembly, heterodimer of an alpha chain and a beta chain. Beta-2-microglobulin is the beta-chain of major histocompatibility complex class I molecules. Forms a heterotrimer with MR1 and a metabolite antigen.

Its subcellular location is the secreted. Its function is as follows. Component of the class I major histocompatibility complex (MHC). Involved in the presentation of peptide antigens to the immune system. The polypeptide is Beta-2-microglobulin (B2m) (Rattus norvegicus (Rat)).